The following is a 139-amino-acid chain: Aspartate 1-decarboxylase (139 aa).

Ser-25 serves as the catalytic Schiff-base intermediate with substrate; via pyruvic acid. A Pyruvic acid (Ser) modification is found at Ser-25. Substrate is bound at residue Thr-57. Residue Tyr-58 is the Proton donor of the active site. Position 73 to 75 (73 to 75) interacts with substrate; that stretch reads GAA. The disordered stretch occupies residues 116-139; the sequence is ELGEDPAHAPAGSGLKDPRHPEGE.

Belongs to the PanD family. In terms of assembly, heterooctamer of four alpha and four beta subunits. It depends on pyruvate as a cofactor. Post-translationally, is synthesized initially as an inactive proenzyme, which is activated by self-cleavage at a specific serine bond to produce a beta-subunit with a hydroxyl group at its C-terminus and an alpha-subunit with a pyruvoyl group at its N-terminus.

It localises to the cytoplasm. It catalyses the reaction L-aspartate + H(+) = beta-alanine + CO2. It functions in the pathway cofactor biosynthesis; (R)-pantothenate biosynthesis; beta-alanine from L-aspartate: step 1/1. Functionally, catalyzes the pyruvoyl-dependent decarboxylation of aspartate to produce beta-alanine. This chain is Aspartate 1-decarboxylase, found in Corynebacterium urealyticum (strain ATCC 43042 / DSM 7109).